The following is a 115-amino-acid chain: Large ribosomal subunit protein bL19 (115 aa).

It belongs to the bacterial ribosomal protein bL19 family.

This protein is located at the 30S-50S ribosomal subunit interface and may play a role in the structure and function of the aminoacyl-tRNA binding site. This Streptococcus equi subsp. equi (strain 4047) protein is Large ribosomal subunit protein bL19.